The following is a 645-amino-acid chain: Bifurcating [FeFe] hydrogenase alpha subunit (645 aa).

The 2Fe-2S ferredoxin-type domain occupies methionine 1–glutamate 76. [2Fe-2S] cluster contacts are provided by cysteine 34, cysteine 45, cysteine 48, and cysteine 60. One can recognise a 4Fe-4S His(Cys)3-ligated-type domain in the interval glutamate 76 to glycine 115. [4Fe-4S] cluster contacts are provided by histidine 92, cysteine 96, cysteine 99, cysteine 105, cysteine 143, cysteine 146, cysteine 149, cysteine 153, cysteine 186, cysteine 189, cysteine 192, cysteine 196, cysteine 295, cysteine 350, cysteine 482, and cysteine 486. 4Fe-4S ferredoxin-type domains lie at serine 133 to phenylalanine 164 and aspartate 178 to aspartate 206. Cysteine 486 contributes to the Fe(2+) binding site. [2Fe-2S] cluster-binding residues include cysteine 575, cysteine 580, cysteine 612, and cysteine 616.

As to quaternary structure, heterotrimer composed of HydA (alpha subunit), HydB (beta subunit) and HydC (gamma subunit). Near neutral and acidic pH conditions favor oligomerization of the heterotrimeric holoenzyme. The cofactor is [2Fe-2S] cluster. [4Fe-4S] cluster is required as a cofactor. Requires Fe(2+) as cofactor.

It is found in the cytoplasm. The catalysed reaction is 2 H2 + 2 oxidized [2Fe-2S]-[ferredoxin] + NAD(+) = 2 reduced [2Fe-2S]-[ferredoxin] + NADH + 3 H(+). In terms of biological role, catalyzes the oxidation of the physiological electron carriers NADH and reduced ferredoxin, coupled to the production of H(2). Acts as a bifurcating [FeFe] hydrogenase, which uses the exergonic oxidation of reduced ferredoxin to drive the unfavorable oxidation of NADH to produce H(2). The alpha subunit contains the catalytic H-cluster. The chain is Bifurcating [FeFe] hydrogenase alpha subunit from Thermotoga maritima (strain ATCC 43589 / DSM 3109 / JCM 10099 / NBRC 100826 / MSB8).